The chain runs to 208 residues: EF-hand protein 5 variant 1 (208 aa).

Residues M1–Q34 form a disordered region. 4 EF-hand domains span residues M64 to E98, E99 to D134, T135 to R170, and S171 to N206. E118, D123, D148, T152, and Y154 together coordinate Ca(2+).

This is EF-hand protein 5 variant 1 from Trypanosoma cruzi.